A 303-amino-acid chain; its full sequence is Protoheme IX farnesyltransferase 1 (303 aa).

9 helical membrane-spanning segments follow: residues 18 to 38 (PGIIMGNLISVAGGFLLAAQG), 42 to 62 (LTLMFATMIGLSLVVASGCAV), 91 to 111 (AVLSFGIGLGIIGFAMLAIFT), 114 to 134 (LAVLFAAIGYVVYVGVYSLYM), 139 to 159 (VYGTLVGSFSGAVPPVVGYCA), 169 to 189 (VILLLMFSLWQMPHSYAIAIF), 213 to 233 (LHIVLYIAVFAVVSALLPLAG), 235 to 255 (TGIAFMAVTFATSLWWLAMAL), and 274 to 294 (FSIITITALSVTMALDFQVVA).

It belongs to the UbiA prenyltransferase family. Protoheme IX farnesyltransferase subfamily.

The protein localises to the cell inner membrane. It carries out the reaction heme b + (2E,6E)-farnesyl diphosphate + H2O = Fe(II)-heme o + diphosphate. Its pathway is porphyrin-containing compound metabolism; heme O biosynthesis; heme O from protoheme: step 1/1. Its function is as follows. Converts heme B (protoheme IX) to heme O by substitution of the vinyl group on carbon 2 of heme B porphyrin ring with a hydroxyethyl farnesyl side group. This is Protoheme IX farnesyltransferase 1 from Shewanella frigidimarina (strain NCIMB 400).